Here is a 145-residue protein sequence, read N- to C-terminus: MLMPKRVKHRRVHRGRMTGKATRGNFVSNGEFGIQAMEPAWITSNQIEAARIAMTRFIKRGGKVWIKIFPDKPVTKKPAETRMGSGKGSPEYWVAVVKPGRVLFEIAGVPEETAREALRLAMHKLPVKCKFVTRETEMGGEANES.

Positions 1–17 are enriched in basic residues; the sequence is MLMPKRVKHRRVHRGRM. The disordered stretch occupies residues 1–22; that stretch reads MLMPKRVKHRRVHRGRMTGKAT.

This sequence belongs to the universal ribosomal protein uL16 family. As to quaternary structure, part of the 50S ribosomal subunit.

Its function is as follows. Binds 23S rRNA and is also seen to make contacts with the A and possibly P site tRNAs. The sequence is that of Large ribosomal subunit protein uL16 from Ruminiclostridium cellulolyticum (strain ATCC 35319 / DSM 5812 / JCM 6584 / H10) (Clostridium cellulolyticum).